The following is a 429-amino-acid chain: Gamma-glutamyl phosphate reductase (429 aa).

It belongs to the gamma-glutamyl phosphate reductase family.

The protein localises to the cytoplasm. It catalyses the reaction L-glutamate 5-semialdehyde + phosphate + NADP(+) = L-glutamyl 5-phosphate + NADPH + H(+). Its pathway is amino-acid biosynthesis; L-proline biosynthesis; L-glutamate 5-semialdehyde from L-glutamate: step 2/2. Catalyzes the NADPH-dependent reduction of L-glutamate 5-phosphate into L-glutamate 5-semialdehyde and phosphate. The product spontaneously undergoes cyclization to form 1-pyrroline-5-carboxylate. In Nocardioides sp. (strain ATCC BAA-499 / JS614), this protein is Gamma-glutamyl phosphate reductase.